The chain runs to 477 residues: Methylenetetrahydrofolate--tRNA-(uracil-5-)-methyltransferase TrmFO (477 aa).

14–19 (GGGLAG) provides a ligand contact to FAD.

It belongs to the MnmG family. TrmFO subfamily. It depends on FAD as a cofactor.

Its subcellular location is the cytoplasm. It catalyses the reaction uridine(54) in tRNA + (6R)-5,10-methylene-5,6,7,8-tetrahydrofolate + NADH + H(+) = 5-methyluridine(54) in tRNA + (6S)-5,6,7,8-tetrahydrofolate + NAD(+). The catalysed reaction is uridine(54) in tRNA + (6R)-5,10-methylene-5,6,7,8-tetrahydrofolate + NADPH + H(+) = 5-methyluridine(54) in tRNA + (6S)-5,6,7,8-tetrahydrofolate + NADP(+). Catalyzes the folate-dependent formation of 5-methyl-uridine at position 54 (M-5-U54) in all tRNAs. The polypeptide is Methylenetetrahydrofolate--tRNA-(uracil-5-)-methyltransferase TrmFO (Rhizobium etli (strain ATCC 51251 / DSM 11541 / JCM 21823 / NBRC 15573 / CFN 42)).